Reading from the N-terminus, the 323-residue chain is V-type ATP synthase subunit C (323 aa).

Belongs to the V-ATPase V0D/AC39 subunit family.

Functionally, produces ATP from ADP in the presence of a proton gradient across the membrane. In Thermus thermophilus (strain ATCC 27634 / DSM 579 / HB8), this protein is V-type ATP synthase subunit C (atpC).